Consider the following 304-residue polypeptide: Protein Largen (304 aa).

Polar residues predominate over residues Met-1–Cys-13. Disordered regions lie at residues Met-1 to Lys-27, Gln-66 to Ser-91, Leu-114 to Pro-160, and His-239 to Val-304. Residues Ile-33–Glu-70 are a coiled coil. Over residues Thr-77–Ser-91 the composition is skewed to low complexity. Composition is skewed to pro residues over residues Pro-120–Leu-129, His-239–Pro-261, and Pro-277–Pro-289.

Regulator of cell size that promotes cell size increase independently of mTOR and Hippo signaling pathways. Acts by stimulating the translation of specific mRNAs, including those encoding proteins affecting mitochondrial functions. Increases mitochondrial mass and respiration. This chain is Protein Largen (PRR16), found in Homo sapiens (Human).